The sequence spans 381 residues: Dynactin subunit 2 (381 aa).

The interval 15-39 is disordered; it reads DQPDVYETPDAPESETSDFYDEEPA. The span at 24-39 shows a compositional bias: acidic residues; the sequence is DAPESETSDFYDEEPA. Coiled coils occupy residues 100–216 and 350–381; these read QKCL…AVGA and GVQEAFAQNLENVNKEVKKLDERMKTLQEKVK.

This sequence belongs to the dynactin subunit 2 family. In terms of assembly, subunit of dynactin, a multiprotein complex associated with dynein.

It is found in the cytoplasm. Its subcellular location is the cytoskeleton. The protein resides in the membrane. In terms of biological role, modulates cytoplasmic dynein binding to an organelle, and plays a role in prometaphase chromosome alignment and spindle organization during mitosis. This Aedes aegypti (Yellowfever mosquito) protein is Dynactin subunit 2.